We begin with the raw amino-acid sequence, 356 residues long: Nucleosome assembly protein 1;4 (356 aa).

Residues 34–88 adopt a coiled-coil conformation; it reads VNALKNKLQNLAGQHSDILETLTPQVRKRVDVLRELQSQHDELESHFFEERAALE. Residues 55–70 carry the Nuclear export signal motif; that stretch reads LTPQVRKRVDVLRELQ. Positions 230 to 235 match the Nuclear localization signal motif; sequence KKKPKK. The tract at residues 304-356 is disordered; that stretch reads FTGEAAEGDEFEDIEDDDDDDDDDDDEDDEDEEDEDDEEEEKSKKKSSALKVE. A compositionally biased stretch (acidic residues) spans 309 to 343; it reads AEGDEFEDIEDDDDDDDDDDDEDDEDEEDEDDEEE. A compositionally biased stretch (basic residues) spans 347–356; that stretch reads KKKSSALKVE.

It belongs to the nucleosome assembly protein (NAP) family. As to quaternary structure, can form homomeric and heteromeric protein complexes with NAP1;3. Binds histones H2A and H2B in vivo. Also able to bind histones H1 and H4 in vitro. Interacts with CYCB1;1 and with alpha tubulin.

The protein localises to the nucleus. It localises to the cytoplasm. Functionally, may modulate chromatin structure by regulation of nucleosome assembly/disassembly. Could function together with B-type cyclins in the regulation of microtubule dynamics. This is Nucleosome assembly protein 1;4 (NAP1;4) from Nicotiana tabacum (Common tobacco).